The sequence spans 408 residues: Glutamate N-acetyltransferase (408 aa).

Thr150, Lys176, Thr189, Glu271, Asn403, and Thr408 together coordinate substrate. The active-site Nucleophile is Thr189.

This sequence belongs to the ArgJ family. In terms of assembly, heterotetramer of two alpha and two beta chains.

The protein resides in the cytoplasm. It carries out the reaction N(2)-acetyl-L-ornithine + L-glutamate = N-acetyl-L-glutamate + L-ornithine. The protein operates within amino-acid biosynthesis; L-arginine biosynthesis; L-ornithine and N-acetyl-L-glutamate from L-glutamate and N(2)-acetyl-L-ornithine (cyclic): step 1/1. Its function is as follows. Catalyzes the transfer of the acetyl group from N(2)-acetylornithine to glutamate, forming N-acetylglutamate and L-ornithine. This chain is Glutamate N-acetyltransferase, found in Methanococcus maripaludis (strain DSM 14266 / JCM 13030 / NBRC 101832 / S2 / LL).